A 295-amino-acid chain; its full sequence is Phosphonoacetaldehyde hydrolase (295 aa).

The active-site Nucleophile is the Asp36. Residues Asp36 and Ala38 each contribute to the Mg(2+) site. Catalysis depends on Lys78, which acts as the Schiff-base intermediate with substrate. Asp212 is a Mg(2+) binding site.

The protein belongs to the HAD-like hydrolase superfamily. PhnX family. Homodimer. Mg(2+) serves as cofactor.

It catalyses the reaction phosphonoacetaldehyde + H2O = acetaldehyde + phosphate + H(+). Its function is as follows. Involved in phosphonate degradation. This Psychromonas ingrahamii (strain DSM 17664 / CCUG 51855 / 37) protein is Phosphonoacetaldehyde hydrolase.